The primary structure comprises 169 residues: Der GTPase-activating protein YihI (169 aa).

Disordered regions lie at residues 1-98 and 144-169; these read MKPS…PQAE and GLSYDDDEEEEEDEKQEDMMRLLRGN. Over residues 10–19 the composition is skewed to basic residues; the sequence is SKGHAKARRK. The span at 20–30 shows a compositional bias: basic and acidic residues; the sequence is TREELDQEARD. Over residues 31-40 the composition is skewed to basic residues; that stretch reads RKRLKKRRGH. Residues 49–58 are compositionally biased toward polar residues; sequence GNTTSGSKGQ. Acidic residues predominate over residues 147–159; sequence YDDDEEEEEDEKQ. Basic and acidic residues predominate over residues 160–169; sequence EDMMRLLRGN.

It belongs to the YihI family. As to quaternary structure, interacts with Der.

A GTPase-activating protein (GAP) that modifies Der/EngA GTPase function. May play a role in ribosome biogenesis. The polypeptide is Der GTPase-activating protein YihI (Escherichia coli O6:K15:H31 (strain 536 / UPEC)).